The primary structure comprises 145 residues: D-aminoacyl-tRNA deacylase (145 aa).

The short motif at 137–138 is the Gly-cisPro motif, important for rejection of L-amino acids element; the sequence is GP.

It belongs to the DTD family. As to quaternary structure, homodimer.

It is found in the cytoplasm. It carries out the reaction glycyl-tRNA(Ala) + H2O = tRNA(Ala) + glycine + H(+). It catalyses the reaction a D-aminoacyl-tRNA + H2O = a tRNA + a D-alpha-amino acid + H(+). An aminoacyl-tRNA editing enzyme that deacylates mischarged D-aminoacyl-tRNAs. Also deacylates mischarged glycyl-tRNA(Ala), protecting cells against glycine mischarging by AlaRS. Acts via tRNA-based rather than protein-based catalysis; rejects L-amino acids rather than detecting D-amino acids in the active site. By recycling D-aminoacyl-tRNA to D-amino acids and free tRNA molecules, this enzyme counteracts the toxicity associated with the formation of D-aminoacyl-tRNA entities in vivo and helps enforce protein L-homochirality. In Erwinia tasmaniensis (strain DSM 17950 / CFBP 7177 / CIP 109463 / NCPPB 4357 / Et1/99), this protein is D-aminoacyl-tRNA deacylase.